We begin with the raw amino-acid sequence, 123 residues long: Fluoride-specific ion channel FluC (123 aa).

A run of 4 helical transmembrane segments spans residues 5–25 (VWVAVGGALGAIVRYFFYKFV), 33–53 (LATFLVNVVASFLLGFIIGAF), 62–82 (LKLALATGFCGALSTFSTFAA), and 94–114 (ITAFVYTAVSVGLGIVSVALG). Na(+) is bound by residues glycine 72 and serine 75.

This sequence belongs to the fluoride channel Fluc/FEX (TC 1.A.43) family.

It localises to the cell inner membrane. The catalysed reaction is fluoride(in) = fluoride(out). With respect to regulation, na(+) is not transported, but it plays an essential structural role and its presence is essential for fluoride channel function. In terms of biological role, fluoride-specific ion channel. Important for reducing fluoride concentration in the cell, thus reducing its toxicity. This chain is Fluoride-specific ion channel FluC, found in Ignicoccus hospitalis (strain KIN4/I / DSM 18386 / JCM 14125).